Here is a 284-residue protein sequence, read N- to C-terminus: Tropomyosin, smooth muscle/fibroblast CTM1 (284 aa).

The stretch at 1 to 284 (MEAIKKKMTM…DVTLQGIGDL (284 aa)) forms a coiled coil. The interval 18–38 (AIDRAEQAETDKKSAEDKATG) is disordered.

The protein belongs to the tropomyosin family. Homodimer. As to expression, predominantly expressed in body wall muscle and heart, low in intestine, ovary and larval tail muscle.

Functionally, the function of tropomyosin in smooth muscle and non-muscle cells is not clear. This chain is Tropomyosin, smooth muscle/fibroblast CTM1 (CTM1), found in Ciona intestinalis (Transparent sea squirt).